The chain runs to 194 residues: Ion-translocating oxidoreductase complex subunit A (194 aa).

6 helical membrane-spanning segments follow: residues Met-1 to Val-21, Cys-48 to Phe-68, Leu-73 to Val-93, Leu-103 to Met-123, Val-135 to Ile-155, and Pro-172 to Ile-192.

It belongs to the NqrDE/RnfAE family. In terms of assembly, the complex is composed of six subunits: RnfA, RnfB, RnfC, RnfD, RnfE and RnfG.

It is found in the cell inner membrane. Functionally, part of a membrane-bound complex that couples electron transfer with translocation of ions across the membrane. The chain is Ion-translocating oxidoreductase complex subunit A from Buchnera aphidicola subsp. Baizongia pistaciae (strain Bp).